Reading from the N-terminus, the 113-residue chain is Large ribosomal subunit protein bL19 (113 aa).

Belongs to the bacterial ribosomal protein bL19 family.

Functionally, this protein is located at the 30S-50S ribosomal subunit interface and may play a role in the structure and function of the aminoacyl-tRNA binding site. The polypeptide is Large ribosomal subunit protein bL19 (Mycobacterium marinum (strain ATCC BAA-535 / M)).